The chain runs to 343 residues: Sorbitol dehydrogenase (343 aa).

The interval 1–26 is disordered; sequence MKALVKTQHGTGHFAVQEKPEPTPGK. Cys39, His60, and Glu61 together coordinate Zn(2+). Glu146 provides a ligand contact to substrate. NAD(+) is bound by residues Ile174, Arg200, and 262–264; that span reads VGL.

Belongs to the zinc-containing alcohol dehydrogenase family. As to quaternary structure, homotetramer. Requires Zn(2+) as cofactor.

The enzyme catalyses keto-D-fructose + NADH + H(+) = D-sorbitol + NAD(+). It catalyses the reaction xylitol + NAD(+) = D-xylulose + NADH + H(+). It carries out the reaction L-iditol + NAD(+) = keto-L-sorbose + NADH + H(+). In terms of biological role, polyol dehydrogenase that catalyzes the NAD(+)-dependent oxidation of various sugar alcohols. Is active with D-sorbitol (D-glucitol), xylitol and L-iditol as substrates, leading to the C2-oxidized products D-fructose, D-xylulose and L-sorbose, respectively. This chain is Sorbitol dehydrogenase (gutB), found in Halalkalibacterium halodurans (strain ATCC BAA-125 / DSM 18197 / FERM 7344 / JCM 9153 / C-125) (Bacillus halodurans).